Consider the following 92-residue polypeptide: Small ribosomal subunit protein uS19c (92 aa).

Belongs to the universal ribosomal protein uS19 family.

The protein resides in the plastid. It localises to the chloroplast. Its function is as follows. Protein S19 forms a complex with S13 that binds strongly to the 16S ribosomal RNA. The polypeptide is Small ribosomal subunit protein uS19c (rps19) (Pinus thunbergii (Japanese black pine)).